A 62-amino-acid polypeptide reads, in one-letter code: DNA gyrase inhibitor YacG (62 aa).

Residues Cys-9, Cys-12, Cys-27, and Cys-31 each contribute to the Zn(2+) site. The span at Gly-43 to Glu-53 shows a compositional bias: basic and acidic residues. Residues Gly-43–Glu-62 form a disordered region.

Belongs to the DNA gyrase inhibitor YacG family. In terms of assembly, interacts with GyrB. Zn(2+) is required as a cofactor.

Its function is as follows. Inhibits all the catalytic activities of DNA gyrase by preventing its interaction with DNA. Acts by binding directly to the C-terminal domain of GyrB, which probably disrupts DNA binding by the gyrase. The protein is DNA gyrase inhibitor YacG of Citrifermentans bemidjiense (strain ATCC BAA-1014 / DSM 16622 / JCM 12645 / Bem) (Geobacter bemidjiensis).